A 305-amino-acid chain; its full sequence is tRNA dimethylallyltransferase (305 aa).

Residue 8 to 15 coordinates ATP; that stretch reads GPTASGKT. Position 10-15 (10-15) interacts with substrate; that stretch reads TASGKT. The interval 33-36 is interaction with substrate tRNA; it reads DSQQ.

Belongs to the IPP transferase family. As to quaternary structure, monomer. Mg(2+) serves as cofactor.

It carries out the reaction adenosine(37) in tRNA + dimethylallyl diphosphate = N(6)-dimethylallyladenosine(37) in tRNA + diphosphate. Functionally, catalyzes the transfer of a dimethylallyl group onto the adenine at position 37 in tRNAs that read codons beginning with uridine, leading to the formation of N6-(dimethylallyl)adenosine (i(6)A). The chain is tRNA dimethylallyltransferase from Anaeromyxobacter sp. (strain K).